Consider the following 511-residue polypeptide: Xylose import ATP-binding protein XylG (511 aa).

ABC transporter domains lie at 6–244 (LEMR…VGRE) and 261–506 (FEAR…IGKP). Position 38–45 (38–45 (GENGAGKS)) interacts with ATP.

The protein belongs to the ABC transporter superfamily. Xylose importer (TC 3.A.1.2.4) family. The complex is composed of two ATP-binding proteins (XylG), two transmembrane proteins (XylH) and a solute-binding protein (XylF).

The protein resides in the cell inner membrane. It catalyses the reaction D-xylose(out) + ATP + H2O = D-xylose(in) + ADP + phosphate + H(+). Functionally, part of the ABC transporter complex XylFGH involved in xylose import. Responsible for energy coupling to the transport system. The sequence is that of Xylose import ATP-binding protein XylG from Brucella suis biovar 1 (strain 1330).